Reading from the N-terminus, the 456-residue chain is Glutamyl-tRNA(Gln) amidotransferase subunit A (456 aa).

Catalysis depends on charge relay system residues Lys74 and Ser149. Catalysis depends on Ser173, which acts as the Acyl-ester intermediate.

It belongs to the amidase family. GatA subfamily. As to quaternary structure, heterotrimer of A, B and C subunits.

It carries out the reaction L-glutamyl-tRNA(Gln) + L-glutamine + ATP + H2O = L-glutaminyl-tRNA(Gln) + L-glutamate + ADP + phosphate + H(+). Allows the formation of correctly charged Gln-tRNA(Gln) through the transamidation of misacylated Glu-tRNA(Gln) in organisms which lack glutaminyl-tRNA synthetase. The reaction takes place in the presence of glutamine and ATP through an activated gamma-phospho-Glu-tRNA(Gln). The protein is Glutamyl-tRNA(Gln) amidotransferase subunit A of Methanobrevibacter smithii (strain ATCC 35061 / DSM 861 / OCM 144 / PS).